The chain runs to 703 residues: Subtilisin-like protease SBT4.7 (703 aa).

The first 19 residues, 1–19 (MAKRDYFCFVVLFLSSVSA), serve as a signal peptide directing secretion. The propeptide at 20–107 (VIDDPQNKQV…VFPNINYKLQ (88 aa)) is activation peptide. An Inhibitor I9 domain is found at 29 to 106 (VYVVYMGSLP…SVFPNINYKL (78 aa)). The 446-residue stretch at 111 to 556 (SWDFLGLKEG…AGHVDQIAAI (446 aa)) folds into the Peptidase S8 domain. Aspartate 139 serves as the catalytic Charge relay system. A glycan (N-linked (GlcNAc...) asparagine) is linked at asparagine 170. The active-site Charge relay system is histidine 194. 4 N-linked (GlcNAc...) asparagine glycosylation sites follow: asparagine 217, asparagine 360, asparagine 416, and asparagine 433. A PA domain is found at 350-411 (KYPLVYGDNF…LLPPDDFDSL (62 aa)). Serine 495 acts as the Charge relay system in catalysis. N-linked (GlcNAc...) asparagine glycosylation is found at asparagine 577, asparagine 615, and asparagine 633.

Belongs to the peptidase S8 family. Post-translationally, the C-terminal propeptide is autocleaved.

The protein resides in the secreted. The chain is Subtilisin-like protease SBT4.7 from Arabidopsis thaliana (Mouse-ear cress).